The chain runs to 379 residues: DnaJ homolog subfamily B member 14 (379 aa).

Residues 1-244 are Cytoplasmic-facing; sequence MEGNRDEAEK…GHEREEERAD (244 aa). The disordered stretch occupies residues 56–90; that stretch reads TAGSSTHCRKPPGSSDQSKPSCGKDGTSGAGEGGK. Residues 108 to 172 form the J domain; the sequence is NYYEVLGVTK…EKRKQYDLTG (65 aa). Residues 245–265 traverse the membrane as a helical segment; it reads GGFSVFIQLMPIIVLILVSLL. At 266–379 the chain is on the lumenal side; it reads SQLMVSNPPY…ERLTSLYKGG (114 aa).

Belongs to the DnaJ family. DNAJB12/DNAJB14 subfamily. In terms of assembly, interacts (via J domain) with HSPA8/Hsc70. Forms a multiprotein complex, at least composed of DNAJB12, DNAJB14, HSPA8/Hsc70 and SGTA; interaction with DNAJB14 and HSPA8/Hsc70 is direct.

It localises to the endoplasmic reticulum membrane. It is found in the nucleus membrane. In terms of biological role, acts as a co-chaperone with HSPA8/Hsc70; required to promote protein folding and trafficking, prevent aggregation of client proteins, and promote unfolded proteins to endoplasmic reticulum-associated degradation (ERAD) pathway. Acts by determining HSPA8/Hsc70's ATPase and polypeptide-binding activities. Can also act independently of HSPA8/Hsc70: together with DNAJB12, acts as a chaperone that promotes maturation of potassium channels KCND2 and KCNH2 by stabilizing nascent channel subunits and assembling them into tetramers. While stabilization of nascent channel proteins is dependent on HSPA8/Hsc70, the process of oligomerization of channel subunits is independent of HSPA8/Hsc70. When overexpressed, forms membranous structures together with DNAJB12 and HSPA8/Hsc70 within the nucleus; the role of these structures, named DJANGOs, is still unclear. The protein is DnaJ homolog subfamily B member 14 of Mus musculus (Mouse).